The primary structure comprises 514 residues: Photosystem II CP47 reaction center protein (514 aa).

A run of 6 helical transmembrane segments spans residues 21–36 (AVHLMHTALVLGWAGS), 109–123 (IVLSGLFFLAAVWHW), 148–164 (GGHLFLLGFLCFNFGTF), 211–226 (IAAGITLMIGGVFHLT), 245–260 (ALASAIAAVFGAAFVV), and 465–480 (CFALLFFFGHIWHGAR).

This sequence belongs to the PsbB/PsbC family. PsbB subfamily. PSII is composed of 1 copy each of membrane proteins PsbA, PsbB, PsbC, PsbD, PsbE, PsbF, PsbH, PsbI, PsbJ, PsbK, PsbL, PsbM, PsbT, PsbX, PsbY, PsbZ, Psb30/Ycf12, peripheral proteins PsbO, CyanoQ (PsbQ), PsbU, PsbV and a large number of cofactors. It forms dimeric complexes. Binds multiple chlorophylls. PSII binds additional chlorophylls, carotenoids and specific lipids. serves as cofactor.

Its subcellular location is the cellular thylakoid membrane. One of the components of the core complex of photosystem II (PSII). It binds chlorophyll and helps catalyze the primary light-induced photochemical processes of PSII. PSII is a light-driven water:plastoquinone oxidoreductase, using light energy to abstract electrons from H(2)O, generating O(2) and a proton gradient subsequently used for ATP formation. The sequence is that of Photosystem II CP47 reaction center protein from Prochlorothrix hollandica.